Reading from the N-terminus, the 497-residue chain is MVVNKRLILILLFILNTAKSDELSWKGNDFTLYARQMPLAEVLHLLSENYDTAITISPLITATFSGKIPPGPPVDILNNLAAQYDLLTWFDGSMLYVYPASLLKHQVITFNILSTGRFIHYLRSQNILSSPGCEVKEITGTKAVEVSGVPSCLTRISQLASVLDNALIKRKDSAVSVSIYTLKYATAMDTQYQYRDQSVVVPGVVSVLREMSKTSVPTSSTNNGSPATQALPMFAADPRQNAVIVRDYAANMAGYRKLITELDQRQQMIEISVKIIDVNAGDINQLGIDWGTAVSLGGKKIAFNTGLNDGGASGFSTVISDTSNFMVRLNALEKSSQAYVLSQPSVVTLNNIQAVLDKNITFYTKLQGEKVAKLESITTGSLLRVTPRLLNDNGTQKIMLNLNIQDGQQSDTQSETDPLPEVQNSEIASQATLLAGQSLLLGGFKQGKQIHSQNKIPLLGDIPVVGHLFRNDTTQVHSVIRLFLIKASVVNNGISHG.

Positions 1–20 (MVVNKRLILILLFILNTAKS) are cleaved as a signal peptide.

The protein belongs to the bacterial secretin family. T3SS SctC subfamily. As to quaternary structure, the core secretion machinery of the T3SS is composed of approximately 20 different proteins, including cytoplasmic components, a base, an export apparatus and a needle. This subunit is part of the base, which anchors the injectisome in the bacterial cell envelope. Forms a stable homooligomeric complex.

It localises to the cell outer membrane. Functionally, component of the type III secretion system (T3SS), also called injectisome, which is used to inject bacterial effector proteins into eukaryotic host cells. Forms a ring-shaped multimeric structure with an apparent central pore in the outer membrane. Required for secretion of some type III-secreted effectors including the SpvB exotoxin. This Salmonella typhimurium (strain 14028s / SGSC 2262) protein is SPI-2 type 3 secretion system secretin.